Here is a 62-residue protein sequence, read N- to C-terminus: Large ribosomal subunit protein bL28 (62 aa).

It belongs to the bacterial ribosomal protein bL28 family.

The protein is Large ribosomal subunit protein bL28 of Acholeplasma laidlawii (strain PG-8A).